The primary structure comprises 310 residues: MKRPHDYSSPDSDTDELIDVGQEDSYCPVTGSMSPGSTSQILARKKRRGIIEKRRRDRINHSLSELRRLVPSAFEKQGSSKLEKAEILQMTVDHLKLLHAMGGKGYFDARALAVDYRTLGFRECVGEVVRYLSSLEGVESSDPIGARLVSHLSHCASELDPLLQSPAALPFPPWPWASFPQLQAASPPASSTPFPPNARRDLAPHGTATILGYPSPALRMGSLSTQGTILNPALTSVRQLPSVPGHLHRLQQHSPEGRTVPSSSSSSSNSSPPQISFRPFVPAGSPAGGRRALSSSSKSAQAWGTEIGAF.

The disordered stretch occupies residues 1–21 (MKRPHDYSSPDSDTDELIDVG). Acidic residues predominate over residues 12–21 (SDTDELIDVG). The bHLH domain occupies 43–98 (ARKKRRGIIEKRRRDRINHSLSELRRLVPSAFEKQGSSKLEKAEILQMTVDHLKLL). The 37-residue stretch at 116-152 (YRTLGFRECVGEVVRYLSSLEGVESSDPIGARLVSHL) folds into the Orange domain. Low complexity-rich tracts occupy residues 182–192 (LQAASPPASST) and 261–273 (PSSSSSSSNSSPP). 2 disordered regions span residues 182–208 (LQAASPPASSTPFPPNARRDLAPHGTA) and 248–310 (HRLQ…IGAF). Positions 293–302 (LSSSSKSAQA) are enriched in polar residues.

The protein belongs to the HEY family.

It is found in the nucleus. Its function is as follows. Transcriptional repressor which functions as a downstream effector of Notch signaling. This Danio rerio (Zebrafish) protein is Hairy/enhancer-of-split related with YRPW motif-like protein (heyl).